The primary structure comprises 292 residues: Nitrogenase iron protein 2 (292 aa).

Residue 8–15 (GKGGIGKS) coordinates ATP. Cys-106 is a [4Fe-4S] cluster binding site. Arg-109 is modified (ADP-ribosylarginine; by dinitrogenase reductase ADP-ribosyltransferase). Residue Cys-142 participates in [4Fe-4S] cluster binding.

The protein belongs to the NifH/BchL/ChlL family. In terms of assembly, homodimer. Requires [4Fe-4S] cluster as cofactor. In terms of processing, the reversible ADP-ribosylation of Arg-109 inactivates the nitrogenase reductase and regulates nitrogenase activity.

It catalyses the reaction N2 + 8 reduced [2Fe-2S]-[ferredoxin] + 16 ATP + 16 H2O = H2 + 8 oxidized [2Fe-2S]-[ferredoxin] + 2 NH4(+) + 16 ADP + 16 phosphate + 6 H(+). Functionally, the key enzymatic reactions in nitrogen fixation are catalyzed by the nitrogenase complex, which has 2 components: the iron protein and the molybdenum-iron protein. The polypeptide is Nitrogenase iron protein 2 (nifH2) (Methanothermococcus thermolithotrophicus (Methanococcus thermolithotrophicus)).